The following is a 176-amino-acid chain: Protein singles bar (176 aa).

The next 4 helical transmembrane spans lie at 13-35 (LGIR…LSRI), 71-91 (FLAT…CYAF), 111-131 (LASC…VVWL), and 140-160 (GFWA…AGIL). In terms of domain architecture, MARVEL spans 30–173 (FVLSRIGLLK…DAYLAFRHFR (144 aa)).

Its subcellular location is the membrane. Functionally, essential for myoblast fusion in developing embryos and pupae, and consequently is essential for muscle formation in adults. Required for progression past the pre-fusion complex stage of myoblast fusion. In Drosophila melanogaster (Fruit fly), this protein is Protein singles bar.